Here is a 208-residue protein sequence, read N- to C-terminus: Fibroblast growth factor-binding protein 2 (208 aa).

Residues 1–19 form the signal peptide; the sequence is MKRVALLFLVVICGMGGLG. Disulfide bonds link Cys-43–Cys-59, Cys-68–Cys-102, and Cys-77–Cys-113. The segment at 130-181 is disordered; that stretch reads EPEDGANRDKSSQKTSASVRGAGKSSVKKTGKPAVLPRIKPTQHGQGSENET. Cysteines 191 and 199 form a disulfide.

The protein belongs to the fibroblast growth factor-binding protein family.

The protein localises to the secreted. It is found in the extracellular space. This Gallus gallus (Chicken) protein is Fibroblast growth factor-binding protein 2 (FGFBP2).